Reading from the N-terminus, the 473-residue chain is UDP-N-acetylmuramate--L-alanine ligase (473 aa).

Residue 122–128 participates in ATP binding; that stretch reads GTHGKTT.

The protein belongs to the MurCDEF family.

The protein resides in the cytoplasm. The catalysed reaction is UDP-N-acetyl-alpha-D-muramate + L-alanine + ATP = UDP-N-acetyl-alpha-D-muramoyl-L-alanine + ADP + phosphate + H(+). Its pathway is cell wall biogenesis; peptidoglycan biosynthesis. In terms of biological role, cell wall formation. The polypeptide is UDP-N-acetylmuramate--L-alanine ligase (Teredinibacter turnerae (strain ATCC 39867 / T7901)).